Reading from the N-terminus, the 369-residue chain is Superinfection exclusion protein (369 aa).

The first 15 residues, Met1–Thr15, serve as a signal peptide directing secretion.

The protein belongs to the serpin family. Orthopoxvirus OPG040 subfamily. As to quaternary structure, interacts with A56 protein.

Its subcellular location is the virion membrane. The protein resides in the host cell membrane. Functionally, prevents cell to cell fusion via its interaction with A56 protein. The A56-K2 complex associates with components of the entry fusion complex (EFC) presumably to avoid superinfection and syncytium formation. This chain is Superinfection exclusion protein (OPG040), found in Vaccinia virus (strain Copenhagen) (VACV).